A 393-amino-acid chain; its full sequence is NAD(P)H-quinone oxidoreductase subunit H, chloroplastic (393 aa).

The protein belongs to the complex I 49 kDa subunit family. NDH is composed of at least 16 different subunits, 5 of which are encoded in the nucleus.

It localises to the plastid. The protein resides in the chloroplast thylakoid membrane. The catalysed reaction is a plastoquinone + NADH + (n+1) H(+)(in) = a plastoquinol + NAD(+) + n H(+)(out). It carries out the reaction a plastoquinone + NADPH + (n+1) H(+)(in) = a plastoquinol + NADP(+) + n H(+)(out). In terms of biological role, NDH shuttles electrons from NAD(P)H:plastoquinone, via FMN and iron-sulfur (Fe-S) centers, to quinones in the photosynthetic chain and possibly in a chloroplast respiratory chain. The immediate electron acceptor for the enzyme in this species is believed to be plastoquinone. Couples the redox reaction to proton translocation, and thus conserves the redox energy in a proton gradient. This chain is NAD(P)H-quinone oxidoreductase subunit H, chloroplastic, found in Lactuca sativa (Garden lettuce).